A 98-amino-acid polypeptide reads, in one-letter code: Prostate and testis expressed protein 3 (98 aa).

Positions 1–20 (MNKHFLLLFSLFYFIVEATS) are cleaved as a signal peptide. The region spanning 21-97 (LKCVTCHLRT…CCNSDFCNFR (77 aa)) is the UPAR/Ly6 domain. Disulfide bonds link Cys23/Cys50, Cys26/Cys35, Cys42/Cys68, and Cys72/Cys88.

It belongs to the PATE family.

Its subcellular location is the secreted. This Mus musculus (Mouse) protein is Prostate and testis expressed protein 3 (Pate3).